A 347-amino-acid chain; its full sequence is Elongation factor Ts (347 aa).

Residues 80-83 form an involved in Mg(2+) ion dislocation from EF-Tu region; sequence TDFV.

The protein belongs to the EF-Ts family.

Its subcellular location is the cytoplasm. Associates with the EF-Tu.GDP complex and induces the exchange of GDP to GTP. It remains bound to the aminoacyl-tRNA.EF-Tu.GTP complex up to the GTP hydrolysis stage on the ribosome. The protein is Elongation factor Ts of Streptococcus gordonii (strain Challis / ATCC 35105 / BCRC 15272 / CH1 / DL1 / V288).